Here is a 228-residue protein sequence, read N- to C-terminus: MRIKIFMLVTAVVLLCCSGVATAAPKTYCEELKGTDTGQACQIQMSDPAYNINISLPSYYPDQKSLENYIAQTRDKFLSAATSSTPREAPYELNITSATYQSAIPPRGTQAVVLKVYQNAGGTHPTTTYKAFDWDQAYRKPITYDTLWQADTDPLPVVFPIVQGELSKQTGQQVSIAPNAGLDPVNYQNFAVTNDGVIFFFNPGELLPEAAGPTQVLVPRSAIDSMLA.

Residues 1 to 23 (MRIKIFMLVTAVVLLCCSGVATA) form the signal peptide.

It belongs to the RsiV family.

The protein localises to the secreted. The protein is Immunogenic protein MPB64 (mpb64) of Mycobacterium bovis (strain ATCC BAA-935 / AF2122/97).